A 690-amino-acid polypeptide reads, in one-letter code: Proprotein convertase subtilisin/kexin type 9 (690 aa).

An N-terminal signal peptide occupies residues 1–28 (MGTVRSRRLWWPLPLLLLLLLGPAGARA). Residues 29 to 150 (QEDDDGDYEE…IEEDSYVFAQ (122 aa)) constitute a propeptide that is removed on maturation. Position 36 is a sulfotyrosine (Tyr-36). Ser-45 carries the post-translational modification Phosphoserine. Residues 75–147 (TYVVVLKEET…VDYIEEDSYV (73 aa)) form the Inhibitor I9 domain. The 307-residue stretch at 153–459 (PWNLERITPA…GWQLFCRTVW (307 aa)) folds into the Peptidase S8 domain. Residues Asp-184 and His-224 each act as charge relay system in the active site. Disulfide bonds link Cys-221–Cys-253 and Cys-321–Cys-356. The Charge relay system role is filled by Ser-384. The interval 448–690 (GAGWQLFCRT…HLAQASQELQ (243 aa)) is C-terminal domain. Cystine bridges form between Cys-455–Cys-525, Cys-475–Cys-524, and Cys-484–Cys-507. N-linked (GlcNAc...) asparagine glycosylation is present at Asn-531. 6 disulfides stabilise this stretch: Cys-532/Cys-599, Cys-550/Cys-598, Cys-560/Cys-586, Cys-606/Cys-677, Cys-624/Cys-676, and Cys-633/Cys-652. At Ser-686 the chain carries Phosphoserine.

It belongs to the peptidase S8 family. Monomer. Can self-associate to form dimers and higher multimers which may have increased LDLR degrading activity. The precursor protein but not the mature protein may form multimers. Interacts with APOB, VLDLR, LRP8/APOER2 and BACE1. The full-length immature form (pro-PCSK9) interacts with SCNN1A, SCNN1B and SCNN1G. The pro-PCSK9 form (via C-terminal domain) interacts with LDLR. Interacts (via the C-terminal domain) with ANXA2 (via repeat Annexin 1); the interaction inhibits the degradation of LDLR. Ca(2+) serves as cofactor. In terms of processing, cleavage by furin and PCSK5 generates a truncated inactive protein that is unable to induce LDLR degradation. Post-translationally, undergoes autocatalytic cleavage in the endoplasmic reticulum to release the propeptide from the N-terminus and the cleavage of the propeptide is strictly required for its maturation and activation. The cleaved propeptide however remains associated with the catalytic domain through non-covalent interactions, preventing potential substrates from accessing its active site. As a result, it is secreted from cells as a propeptide-containing, enzymatically inactive protein. Phosphorylation protects the propeptide against proteolysis.

The protein resides in the cytoplasm. The protein localises to the secreted. Its subcellular location is the endosome. It localises to the lysosome. It is found in the cell surface. The protein resides in the endoplasmic reticulum. The protein localises to the golgi apparatus. Its activity is regulated as follows. Its proteolytic activity is autoinhibited by the non-covalent binding of the propeptide to the catalytic domain. Inhibited by EGTA. Crucial player in the regulation of plasma cholesterol homeostasis. Binds to low-density lipid receptor family members: low density lipoprotein receptor (LDLR), very low density lipoprotein receptor (VLDLR), apolipoprotein E receptor (LRP1/APOER) and apolipoprotein receptor 2 (LRP8/APOER2), and promotes their degradation in intracellular acidic compartments. Acts via a non-proteolytic mechanism to enhance the degradation of the hepatic LDLR through a clathrin LDLRAP1/ARH-mediated pathway. May prevent the recycling of LDLR from endosomes to the cell surface or direct it to lysosomes for degradation. Can induce ubiquitination of LDLR leading to its subsequent degradation. Inhibits intracellular degradation of APOB via the autophagosome/lysosome pathway in a LDLR-independent manner. Involved in the disposal of non-acetylated intermediates of BACE1 in the early secretory pathway. Inhibits epithelial Na(+) channel (ENaC)-mediated Na(+) absorption by reducing ENaC surface expression primarily by increasing its proteasomal degradation. Regulates neuronal apoptosis via modulation of LRP8/APOER2 levels and related anti-apoptotic signaling pathways. This Lagothrix lagotricha (Brown woolly monkey) protein is Proprotein convertase subtilisin/kexin type 9 (PCSK9).